The primary structure comprises 563 residues: Formate--tetrahydrofolate ligase (563 aa).

65–72 (TPLGEGKT) contributes to the ATP binding site.

The protein belongs to the formate--tetrahydrofolate ligase family.

The enzyme catalyses (6S)-5,6,7,8-tetrahydrofolate + formate + ATP = (6R)-10-formyltetrahydrofolate + ADP + phosphate. The protein operates within one-carbon metabolism; tetrahydrofolate interconversion. The sequence is that of Formate--tetrahydrofolate ligase from Cutibacterium acnes (strain DSM 16379 / KPA171202) (Propionibacterium acnes).